The primary structure comprises 1733 residues: MEVLKKLKLLLWKNFILKRRKTLITLLEMLMPLLFCAIVLYLRLNSMPRKKSSTNYPAVDVSLLPVYFYNYPLKSKFQLAYIPSKSETLKAVTEVVEQTFAVDFEVLGFPSVPLFEDYIIKDPKSFYILVGIIFHHDFNSSNEPLPLVVKYDLRFSYVQRNFVSPPRHLFFQEEIEGWCTAFLYPPNLSQAPREFSYADGGNPGYNKEGFLAIQHAVDKAIMRHHAPKAALNMFKDLHVLVQRFPFGPHIQDPFLVILQNEFPLLLMLSFICVELIITNSVLSEKERKQKEYMSMMGVESWLHWVAWFITFFISVSITVSVMTVLFCTKINRVAVFRNSNPTLIFIFLMCFAIATIFFAFMMSTFFQRAHVGTVIGGTVFFFTYLPYMYITFSYHQRTYTQKILSCLFSNVAMATGVRFISLFEAEGTGIQWRNIGSVWGDFSFAQVLGMLLLDSFLYCLIAFLVESLFPRKFGIPKSWYIFAKKPVPEIPPLLNIGDPEKPSKGNFMQDEPTNQMNTIEIQHLYKVFYSGRSKRTAIRDLSMNLYKGQVTVLLGHNGAGKTTVCSVLTGLITPSKGHAYIHGCEISKDMVQIRKSLGWCPQHDILFDNFTVTDHLYFYGQLKGLSPQDCHEQTQEMLHLLGLKDKWNSRSKFLSGGMKRKLSIGIALIAGSKVLILDEPTSGLDSPSRRAIWDLLQQQKGDRTVLLTTHFMDEADLLGDRIAILAKGELQCCGSPSFLKQKYGAGYYMTIIKTPLCDTSKLSEVIYHHIPNAVLESNIGEEMIVTLPKKTIHRFEALFNDLELRQTELGISTFATSVTTMEEVFIRVCKLADPSTNVLTEKRHSLHPLPRHHRVPVDRIKCLHSGTFPVSTEQPMRLNTGFCLLCQQFYAMLLKKITYSRRNWMLVLSVQVLLPLAIIMLSLTFFNFKLRKLDNVPLELTLQTYGQTIVPFFIAENSHLDPQLSDDFVKMLVAAGQVPLRIQGSVEDFLLKKAKEAPEGFDKLYVVAASFEDVNNHTTVKALFNNQAYHSPSLALTLVDNLLFKLLSGANASITTTNYPQPQTAIEVSESILYQGPKGHYLVVNFLFGIAFLSSSFSILTVGEKSVKSKSLQFVSGVSTAVFWLSALLWDLISFLVPTLLLVLVFLWYKEEAFAHHESIPAVVLIMMLYGWAVIPLVYTVSFSFNTPGSACVKLVVMLTFLSISPVVLVTVTSEKDLGYTELSDSLDHIFLILPGHCLGMALSNLYYNFELKKFCSAKNLSDIDCNDVLEGYVVQENIYAWESLGIGKYLTALAVLGPVYITMLFLTEANAFYVLKSRLSGFFPSFWKEKSGMIFDVAEPEDEDVLEEAETIKRYLETLVKKNPLVVKEVSKVYKDKVPLLAVNKVSFVVKEEECFGLLGLNGAGKTSIFNMLTSEQPITSGDAFVKGFNIKSDIAKVRQWIGYCPEFDALLNFMTGREMLVMYARIRGIPECHIKACVDLILENLLMCVCADKLVKTYSGGNKRMLSTGIALVGEPAVILLDEPSTGMDPVARRLLWDTVERVRESGKTIVITSHSMEECEALCTRLAIMVQGQFKCLGSPQHLKSKFGISYSLQAKVRRKWQQQMLEEFKAFVDLTFPGSNLEDEHQNMLQYYLPGPNLSWAKVFSIMEQAKKDYMLEDYSISQLSLEDIFLNFTRPESSTKEQIQQEQAVLASPSPPSNSRPISSPPSRLSSPTPKPLPSPPPSEPILL.

The next 7 helical transmembrane spans lie at 22-42, 262-282, 306-326, 342-362, 372-392, 403-423, and 444-464; these read TLIT…VLYL, FPLL…NSVL, AWFI…TVLF, TLIF…AFMM, GTVI…YITF, ILSC…ISLF, and FAQV…IAFL. The region spanning 519–752 is the ABC transporter 1 domain; the sequence is IEIQHLYKVF…YGAGYYMTII (234 aa). 555–562 provides a ligand contact to ATP; that stretch reads GHNGAGKT. A glycan (N-linked (GlcNAc...) asparagine) is linked at asparagine 609. The next 7 membrane-spanning stretches (helical) occupy residues 906–926, 1082–1102, 1128–1148, 1160–1180, 1192–1212, 1230–1250, and 1287–1307; these read LVLS…LTFF, LVVN…ILTV, LLWD…VFLW, IPAV…LVYT, CVKL…LVTV, IFLI…YYNF, and IGKY…MLFL. The 234-residue stretch at 1366–1599 folds into the ABC transporter 2 domain; that stretch reads LVVKEVSKVY…FGISYSLQAK (234 aa). Residue 1401 to 1408 coordinates ATP; sequence GLNGAGKT. Positions 1681-1692 are enriched in polar residues; the sequence is ESSTKEQIQQEQ. A disordered region spans residues 1681–1733; it reads ESSTKEQIQQEQAVLASPSPPSNSRPISSPPSRLSSPTPKPLPSPPPSEPILL. Low complexity predominate over residues 1704 to 1717; that stretch reads SRPISSPPSRLSSP. Residues 1718-1733 show a composition bias toward pro residues; the sequence is TPKPLPSPPPSEPILL.

This sequence belongs to the ABC transporter superfamily. ABCA family. N-glycosylated. In the testis, detected predominantly in elongated spermatids at the late stage of germ cell development and in sperm, with no expression detected in immature germ cells such as spermatogonia and spermatocytes or in somatic cells such as Sertoli cells (at protein level). Expressed in the head and tail midpiece of elongated spermatids and sperm (at protein level). Expressed exclusively in the testis.

The protein localises to the endoplasmic reticulum membrane. Its subcellular location is the cytoplasm. The catalysed reaction is cholesterol(in) + ATP + H2O = cholesterol(out) + ADP + phosphate + H(+). Its function is as follows. Promotes cholesterol efflux from sperm which renders sperm capable of fertilization. Has also been shown to decrease levels of intracellular esterified neutral lipids including cholesteryl esters, fatty acid esters and triacylglycerols. This Mus musculus (Mouse) protein is ATP-binding cassette sub-family A member 17.